The chain runs to 42 residues: Photosystem II reaction center protein J (42 aa).

Residues 10–30 (IPLWLVGTVVGTLALGLVALF) traverse the membrane as a helical segment.

This sequence belongs to the PsbJ family. PSII is composed of 1 copy each of membrane proteins PsbA, PsbB, PsbC, PsbD, PsbE, PsbF, PsbH, PsbI, PsbJ, PsbK, PsbL, PsbM, PsbT, PsbX, PsbY, PsbZ, Psb30/Ycf12, at least 3 peripheral proteins of the oxygen-evolving complex and a large number of cofactors. It forms dimeric complexes.

Its subcellular location is the plastid. It localises to the chloroplast thylakoid membrane. Its function is as follows. One of the components of the core complex of photosystem II (PSII). PSII is a light-driven water:plastoquinone oxidoreductase that uses light energy to abstract electrons from H(2)O, generating O(2) and a proton gradient subsequently used for ATP formation. It consists of a core antenna complex that captures photons, and an electron transfer chain that converts photonic excitation into a charge separation. The chain is Photosystem II reaction center protein J from Oltmannsiellopsis viridis (Marine flagellate).